The chain runs to 633 residues: Rab11 family-interacting protein 4 (633 aa).

2 consecutive EF-hand domains span residues 17–52 (LFLQ…FAQG) and 50–85 (AQGD…MKGC). Ca(2+) contacts are provided by Asp30, Asp32, Asp34, Asp63, Asn65, Arg69, and Asp74. Disordered regions lie at residues 152–182 (SDLD…LGSL) and 218–257 (GEGE…QTPR). Polar residues predominate over residues 238–254 (TNALSDLGSSVPSSAGQ). Residues 410–613 (AREKGTEIVL…EEINYRLRQY (204 aa)) are a coiled coil. Residues 570–632 (EAKSLFSTQT…DHNPSILEIK (63 aa)) form the FIP-RBD domain.

As to quaternary structure, homodimer. Forms a complex with Rab11 (rab11a or rab11b) and arf6.

It localises to the recycling endosome membrane. The protein resides in the cleavage furrow. Its subcellular location is the midbody. The protein localises to the cytoplasmic vesicle. Its function is as follows. Acts as a regulator of endocytic traffic by participating in membrane delivery. Required for the abscission step in cytokinesis, possibly by acting as an 'address tag' delivering recycling endosome membranes to the cleavage furrow during late cytokinesis. In Xenopus tropicalis (Western clawed frog), this protein is Rab11 family-interacting protein 4 (rab11fip4).